Reading from the N-terminus, the 161-residue chain is PTS system glucose-specific EIIA component (161 aa).

The 105-residue stretch at 31–135 (DPVFSKKIVG…SILTPVVISN (105 aa)) folds into the PTS EIIA type-1 domain. His68 and His83 together coordinate Zn(2+). His83 (tele-phosphohistidine intermediate; for EIIA activity) is an active-site residue. At His83 the chain carries Phosphohistidine; by HPr.

Zn(2+) is required as a cofactor.

Its subcellular location is the cytoplasm. The phosphoenolpyruvate-dependent sugar phosphotransferase system (sugar PTS), a major carbohydrate active transport system, catalyzes the phosphorylation of incoming sugar substrates concomitantly with their translocation across the cell membrane. The enzyme II complex composed of PtsG and Crr is involved in glucose transport. The sequence is that of PTS system glucose-specific EIIA component (crr) from Buchnera aphidicola subsp. Acyrthosiphon pisum (strain APS) (Acyrthosiphon pisum symbiotic bacterium).